The chain runs to 463 residues: Adenosylhomocysteinase (463 aa).

Thr-54, Asp-128, and Glu-189 together coordinate substrate. An NAD(+)-binding site is contributed by 190–192 (TTT). Lys-219 and Asp-223 together coordinate substrate. NAD(+) is bound by residues Asn-224, 253–258 (GYGDVG), Glu-276, Asn-311, 332–334 (IGH), and Asn-377.

The protein belongs to the adenosylhomocysteinase family. The cofactor is NAD(+).

The protein resides in the cytoplasm. It carries out the reaction S-adenosyl-L-homocysteine + H2O = L-homocysteine + adenosine. It participates in amino-acid biosynthesis; L-homocysteine biosynthesis; L-homocysteine from S-adenosyl-L-homocysteine: step 1/1. Functionally, may play a key role in the regulation of the intracellular concentration of adenosylhomocysteine. This chain is Adenosylhomocysteinase, found in Cereibacter sphaeroides (Rhodobacter sphaeroides).